The primary structure comprises 428 residues: Light-independent protochlorophyllide reductase subunit N (428 aa).

The [4Fe-4S] cluster site is built by Cys-29, Cys-54, and Cys-115.

The protein belongs to the BchN/ChlN family. In terms of assembly, protochlorophyllide reductase is composed of three subunits; BchL, BchN and BchB. Forms a heterotetramer of two BchB and two BchN subunits. Requires [4Fe-4S] cluster as cofactor.

The catalysed reaction is chlorophyllide a + oxidized 2[4Fe-4S]-[ferredoxin] + 2 ADP + 2 phosphate = protochlorophyllide a + reduced 2[4Fe-4S]-[ferredoxin] + 2 ATP + 2 H2O. It functions in the pathway porphyrin-containing compound metabolism; bacteriochlorophyll biosynthesis (light-independent). Component of the dark-operative protochlorophyllide reductase (DPOR) that uses Mg-ATP and reduced ferredoxin to reduce ring D of protochlorophyllide (Pchlide) to form chlorophyllide a (Chlide). This reaction is light-independent. The NB-protein (BchN-BchB) is the catalytic component of the complex. This Cereibacter sphaeroides (strain ATCC 17023 / DSM 158 / JCM 6121 / CCUG 31486 / LMG 2827 / NBRC 12203 / NCIMB 8253 / ATH 2.4.1.) (Rhodobacter sphaeroides) protein is Light-independent protochlorophyllide reductase subunit N.